We begin with the raw amino-acid sequence, 506 residues long: Lysine--tRNA ligase (506 aa).

Residues Glu-416 and Glu-423 each contribute to the Mg(2+) site.

It belongs to the class-II aminoacyl-tRNA synthetase family. As to quaternary structure, homodimer. Mg(2+) serves as cofactor.

It is found in the cytoplasm. It catalyses the reaction tRNA(Lys) + L-lysine + ATP = L-lysyl-tRNA(Lys) + AMP + diphosphate. This is Lysine--tRNA ligase (lysS) from Xylella fastidiosa (strain 9a5c).